An 83-amino-acid chain; its full sequence is Weak toxin DE-1 (83 aa).

Residues 1–21 (MKTLLLTLVVVTIVCLDLGYS) form the signal peptide. Disulfide bonds link Cys24/Cys45, Cys38/Cys62, Cys64/Cys75, and Cys76/Cys81.

This sequence belongs to the three-finger toxin family. Short-chain subfamily. Type I alpha-neurotoxin sub-subfamily. In terms of tissue distribution, expressed by the venom gland.

It localises to the secreted. The sequence is that of Weak toxin DE-1 from Ophiophagus hannah (King cobra).